Consider the following 464-residue polypeptide: Glycine receptor subunit alpha-3 (464 aa).

Positions 1-33 are cleaved as a signal peptide; sequence MAHVRHFRTLVSGFYFWEAALLLSLVATKETNS. At 34-255 the chain is on the extracellular side; the sequence is ARSRSAPMSP…RFHLERQMGY (222 aa). Asn71 is a glycosylation site (N-linked (GlcNAc...) asparagine). Cys171 and Cys185 form a disulfide bridge. 2 residues coordinate Zn(2+): Glu225 and Asp227. A disulfide bridge connects residues Cys231 and Cys242. 235–240 contacts strychnine; it reads YNTGKF. Residue His248 coordinates Zn(2+). The chain crosses the membrane as a helical span at residues 256 to 277; the sequence is YLIQMYIPSLLIVILSWVSFWI. At 278-282 the chain is on the cytoplasmic side; that stretch reads NMDAA. A helical membrane pass occupies residues 283–303; that stretch reads PARVALGITTVLTMTTQSSGS. At 304 to 314 the chain is on the extracellular side; sequence RASLPKVSYVK. The chain crosses the membrane as a helical span at residues 315 to 335; that stretch reads AIDIWMAVCLLFVFSALLEYA. At 336 to 430 the chain is on the cytoplasmic side; the sequence is AVNFVSRQHK…FIDRAKKIDT (95 aa). Ser370 bears the Phosphoserine mark. The residue at position 379 (Ser379) is a Phosphoserine; by PKA. A helical transmembrane segment spans residues 431–451; it reads ISRACFPLAFLIFNIFYWVIY. Topologically, residues 452–464 are extracellular; sequence KILRHEDIHQQQD.

The protein belongs to the ligand-gated ion channel (TC 1.A.9) family. Glycine receptor (TC 1.A.9.3) subfamily. GLRA3 sub-subfamily. As to quaternary structure, homopentamer (in vitro). Heteropentamer composed of GLRA3 and GLRB. Both homopentamers and heteropentamers form functional ion channels, but their characteristics are subtly different. In terms of processing, phosphorylated by PKA; this causes down-regulation of channel activity. Dephosphorylated in response to activation of HTR1A signaling; this increases channel activity. As to expression, detected in brainstem, also in neurons that control rhythmic breathing. Detected in superficial laminae of the dorsal horn of the thoracic spinal cord. Detected in dentate gyrus in hippocampus, especially in stratum granulare. Detected in the inner plexiform layer in the retina (at protein level). Detected in midbrain, thalamus, brain cortex, hippocampus, and at lower levels in cerebellum.

It is found in the postsynaptic cell membrane. The protein localises to the synapse. Its subcellular location is the perikaryon. The protein resides in the cell projection. It localises to the dendrite. It is found in the cell membrane. It carries out the reaction chloride(in) = chloride(out). Inhibited by prostaglandin E2, probably via PKA-mediated phosphorylation at Ser-379. Functionally, glycine receptors are ligand-gated chloride channels. Channel opening is triggered by extracellular glycine. Channel characteristics depend on the subunit composition; heteropentameric channels display faster channel closure. Plays an important role in the down-regulation of neuronal excitability. Contributes to the generation of inhibitory postsynaptic currents. Contributes to increased pain perception in response to increased prostaglandin E2 levels. Plays a role in the regulation of breathing rhythm, especially of the duration of the postinspiratory phase. Plays a role in cellular responses to ethanol. The sequence is that of Glycine receptor subunit alpha-3 (Glra3) from Mus musculus (Mouse).